The following is a 930-amino-acid chain: A disintegrin and metalloproteinase with thrombospondin motifs 5 (930 aa).

The N-terminal stretch at 1 to 21 is a signal peptide; that stretch reads MRLEWAPLLLLLLLLSASCLS. Positions 22–261 are excised as a propeptide; it reads LAADSPAAAP…PQTWWRRRRR (240 aa). Low complexity predominate over residues 31–53; that stretch reads PAQDKTRQPQAAAAAAEPDQPQG. Disordered regions lie at residues 31–68 and 207–231; these read PAQD…LAGQ and ASCE…SRRR. Positions 207–214 match the Cysteine switch motif; it reads ASCETPAS. Residue cysteine 209 coordinates Zn(2+). Over residues 211-225 the composition is skewed to polar residues; the sequence is TPASPSGPQESPSVH. One can recognise a Peptidase M12B domain in the interval 267-476; it reads RQVELLLVAD…GHGNCLLDLP (210 aa). 8 disulfide bridges follow: cysteine 342-cysteine 394, cysteine 371-cysteine 376, cysteine 388-cysteine 471, cysteine 426-cysteine 455, cysteine 497-cysteine 519, cysteine 508-cysteine 529, cysteine 514-cysteine 548, and cysteine 542-cysteine 553. Residue histidine 410 participates in Zn(2+) binding. Glutamate 411 is an active-site residue. Positions 414 and 420 each coordinate Zn(2+). Residues 485 to 566 form the Disintegrin domain; it reads ELPGQTYDAT…TKKKYYSTSS (82 aa). Asparagine 498 carries N-linked (GlcNAc...) asparagine glycosylation. A TSP type-1 1 domain is found at 567–622; it reads HGNWGSWGPWGQCSRSCGGGVQFAYRHCNNPAPRNSGRYCTGKRAIYRSCSVTPCP. Tryptophan 570 and tryptophan 573 each carry a C-linked (Man) tryptophan glycan. Disulfide bonds link cysteine 579–cysteine 616, cysteine 583–cysteine 621, and cysteine 594–cysteine 606. An O-linked (Fuc...) serine glycan is attached at serine 582. Asparagine 728, asparagine 802, and asparagine 807 each carry an N-linked (GlcNAc...) asparagine glycan. The segment at 732-874 is spacer; it reads TKIIGTFNKK…HGSNKVGPHS (143 aa). A TSP type-1 2 domain is found at 875–929; that stretch reads TQLQWVTGPWLACSRTCDTGWHTRTVQCQDGNRKLAKGCLLSQRPSAFKQCLLKK.

The cofactor is Zn(2+). Post-translationally, the precursor is cleaved by furin and PCSK7 outside of the cell. Glycosylated. Can be O-fucosylated by POFUT2 on a serine or a threonine residue found within the consensus sequence C1-X(2)-(S/T)-C2-G of the TSP type-1 repeat domains where C1 and C2 are the first and second cysteine residue of the repeat, respectively. Fucosylated repeats can then be further glycosylated by the addition of a beta-1,3-glucose residue by the glucosyltransferase, B3GALTL. Fucosylation mediates the efficient secretion of ADAMTS family members. Can also be C-glycosylated with one or two mannose molecules on tryptophan residues within the consensus sequence W-X-X-W of the TPRs, and N-glycosylated. These other glycosylations can also facilitate secretion. Expressed in skeletal muscle.

The protein resides in the secreted. It is found in the extracellular space. It localises to the extracellular matrix. Its function is as follows. Metalloproteinase that plays an important role in connective tissue organization, development, inflammation and cell migration. Extracellular matrix (ECM) degrading enzyme that shows proteolytic activity toward the hyalectan group of chondroitin sulfate proteoglycans (CSPGs) including ACAN, VCAN, BCAN and NCAN. Cleavage within the hyalectans occurs at Glu-Xaa recognition motifs. Plays a role in embryonic development, including limb and cardiac morphogenesis, and skeletal muscle development through its VCAN remodeling properties. Cleaves VCAN in the pericellular matrix surrounding myoblasts, facilitating myoblast contact and fusion which is required for skeletal muscle development and regeneration. Participates in the development of brown adipose tissue and browning of white adipose tissue. Plays an important role for T-lymphocyte migration from draining lymph nodes following viral infection. This chain is A disintegrin and metalloproteinase with thrombospondin motifs 5 (Adamts5), found in Mus musculus (Mouse).